We begin with the raw amino-acid sequence, 207 residues long: Superoxide dismutase [Mn] (207 aa).

Mn(2+) contacts are provided by H28, H76, D160, and H164.

Belongs to the iron/manganese superoxide dismutase family. It depends on Mn(2+) as a cofactor.

It catalyses the reaction 2 superoxide + 2 H(+) = H2O2 + O2. In terms of biological role, destroys superoxide anion radicals which are normally produced within the cells and which are toxic to biological systems. In Mycobacterium lepraemurium, this protein is Superoxide dismutase [Mn] (sodA).